Consider the following 1559-residue polypeptide: Bile pigment transporter 1 (1559 aa).

Residues 1–29 (MSSLEVVDGCPYGYRPYPDSGTNALNPCF) are Vacuolar-facing. Residues 30-50 (ISVISAWQAVFFLLIGSYQLW) form a helical membrane-spanning segment. Over 51 to 84 (KLYKNNKVPPRFKNFPTLPSKINSRHLTHLTNVC) the chain is Cytoplasmic. The helical transmembrane segment at 85–105 (FQSTLIICELALVSQSSDRVY) threads the bilayer. The Vacuolar portion of the chain corresponds to 106 to 110 (PFILK). Residues 111-127 (KALYLNLLFNLGISLPT) traverse the membrane as a helical segment. Residues 128–139 (QYLAYFKSTFSM) lie on the Cytoplasmic side of the membrane. Residues 140–160 (GNQLFYYMFQILLQLFLILQR) form a helical membrane-spanning segment. Over 161–178 (YYHGSSNERLTVISGQTA) the chain is Vacuolar. Residues 179–199 (MILEVLLLFNSVAIFIYDLCI) traverse the membrane as a helical segment. The Cytoplasmic portion of the chain corresponds to 200 to 283 (FEPINELSEY…WLNRNSLWRA (84 aa)). A helical transmembrane segment spans residues 284 to 304 (IWKSFGRTISVAMLYETTSDL). Residues 292 to 578 (ISVAMLYETT…VPSMINTIIE (287 aa)) form the ABC transmembrane type-1 1 domain. Topologically, residues 305 to 333 (LSVVQPQFLRIFIDGLNPETSSKYPPLNG) are vacuolar. A helical membrane pass occupies residues 334 to 354 (VFIALTLFVISVVSVFLTNQF). Over 355–410 (YIGIFEAGLGIRGSLASLVYQKSLRLTLAERNEKSTGDILNLMSVDVLRIQRFFEN) the chain is Cytoplasmic. A helical transmembrane segment spans residues 411–431 (AQTIIGAPIQIIVVLTSLYWL). The Vacuolar segment spans residues 432–434 (LGK). Residues 435 to 455 (AVIGGLVTMAIMMPINAFLSR) traverse the membrane as a helical segment. Residues 456–518 (KVKKLSKTQM…NFRKIGIVSN (63 aa)) are Cytoplasmic-facing. Residues 519–539 (LIYFAWNCVPLMVTCSTFGLF) traverse the membrane as a helical segment. Residues 540 to 560 (SLFSDSPLSPAIVFPSLSLFN) are Vacuolar-facing. A helical membrane pass occupies residues 561 to 581 (ILNSAIYSVPSMINTIIETSV). The Cytoplasmic portion of the chain corresponds to 582–972 (SMERLKSFLL…VKTKIYLAYI (391 aa)). One can recognise an ABC transporter 1 domain in the interval 639–871 (LRTDEESIIG…KNNTSKLKKL (233 aa)). At Ser-645 the chain carries Phosphoserine. ATP is bound at residue 672–679 (GRVGAGKS). Residues 877-899 (SPIDNGNESDVQTEHRSESEVDE) form a disordered region. Residue Ser-885 is modified to Phosphoserine. Thr-889 carries the phosphothreonine modification. Residues Ser-893 and Ser-895 each carry the phosphoserine modification. Residue Thr-916 is modified to Phosphothreonine. Residues Ser-927 and Ser-931 each carry the phosphoserine modification. At Thr-934 the chain carries Phosphothreonine. The chain crosses the membrane as a helical span at residues 973-993 (KACGVLGVVLFFLFMILTRVF). Positions 980–1265 (VVLFFLFMIL…IVRTTVTIET (286 aa)) constitute an ABC transmembrane type-1 2 domain. Residues 994-1030 (DLAENFWLKYWSESNEKNGSNERVWMFVGVYSLIGVA) lie on the Vacuolar side of the membrane. Asn-1011 carries N-linked (GlcNAc...) asparagine glycosylation. The chain crosses the membrane as a helical span at residues 1031–1052 (SAAFNNLRSIMMLLYCSIRGSK). Residues 1053–1095 (KLHESMAKSVIRSPMTFFETTPVGRIINRFSSDMDAVDSNLQY) are Cytoplasmic-facing. A helical transmembrane segment spans residues 1096-1116 (IFSFFFKSILTYLVTVILVGY). A topological domain (vacuolar) is located at residue Asn-1117. Residues 1118–1138 (MPWFLVFNMFLVVIYIYYQTF) traverse the membrane as a helical segment. The Cytoplasmic portion of the chain corresponds to 1139–1209 (YIVLSRELKR…STNRWLSVRL (71 aa)). A helical transmembrane segment spans residues 1210–1230 (QTIGATIVLATAILALATMNT). Residues 1231–1235 (KRQLS) lie on the Vacuolar side of the membrane. A helical transmembrane segment spans residues 1236-1256 (SGMVGLLMSYSLEVTGSLTWI). The Cytoplasmic portion of the chain corresponds to 1257-1559 (VRTTVTIETN…SLCEKGGYLK (303 aa)). The 252-residue stretch at 1302–1553 (IEFKNYSTKY…KTSIFYSLCE (252 aa)) folds into the ABC transporter 2 domain. ATP is bound at residue 1336–1343 (GRTGAGKS). Basic and acidic residues predominate over residues 1420 to 1433 (HLEKMLHSKPRGDD). Positions 1420-1439 (HLEKMLHSKPRGDDSNEEDG) are disordered.

The protein belongs to the ABC transporter superfamily.

The protein resides in the vacuole membrane. Cooperates for the ATP-dependent vacuolar transport of bilirubin and glutathione conjugates. This chain is Bile pigment transporter 1 (BPT1), found in Saccharomyces cerevisiae (strain ATCC 204508 / S288c) (Baker's yeast).